Reading from the N-terminus, the 503-residue chain is ATP synthase subunit alpha (503 aa).

Residue 170-177 coordinates ATP; that stretch reads GDKQTGKT.

Belongs to the ATPase alpha/beta chains family. In terms of assembly, F-type ATPases have 2 components, CF(1) - the catalytic core - and CF(0) - the membrane proton channel. CF(1) has five subunits: alpha(3), beta(3), gamma(1), delta(1), epsilon(1). CF(0) has three main subunits: a(1), b(2) and c(9-12). The alpha and beta chains form an alternating ring which encloses part of the gamma chain. CF(1) is attached to CF(0) by a central stalk formed by the gamma and epsilon chains, while a peripheral stalk is formed by the delta and b chains.

Its subcellular location is the cell inner membrane. It catalyses the reaction ATP + H2O + 4 H(+)(in) = ADP + phosphate + 5 H(+)(out). Functionally, produces ATP from ADP in the presence of a proton gradient across the membrane. The alpha chain is a regulatory subunit. This is ATP synthase subunit alpha from Helicobacter pylori (strain Shi470).